Reading from the N-terminus, the 410-residue chain is Multifunctional CCA protein (410 aa).

Residues glycine 8 and arginine 11 each coordinate ATP. CTP contacts are provided by glycine 8 and arginine 11. Mg(2+) is bound by residues glutamate 21 and aspartate 23. Residues arginine 91, arginine 137, and arginine 140 each contribute to the ATP site. CTP contacts are provided by arginine 91, arginine 137, and arginine 140. The HD domain maps to 228–329 (TGIHSLMTLR…VKLLEQVDAF (102 aa)).

The protein belongs to the tRNA nucleotidyltransferase/poly(A) polymerase family. Bacterial CCA-adding enzyme type 1 subfamily. As to quaternary structure, monomer. Can also form homodimers and oligomers. Requires Mg(2+) as cofactor. The cofactor is Ni(2+).

The enzyme catalyses a tRNA precursor + 2 CTP + ATP = a tRNA with a 3' CCA end + 3 diphosphate. It carries out the reaction a tRNA with a 3' CCA end + 2 CTP + ATP = a tRNA with a 3' CCACCA end + 3 diphosphate. Its function is as follows. Catalyzes the addition and repair of the essential 3'-terminal CCA sequence in tRNAs without using a nucleic acid template. Adds these three nucleotides in the order of C, C, and A to the tRNA nucleotide-73, using CTP and ATP as substrates and producing inorganic pyrophosphate. tRNA 3'-terminal CCA addition is required both for tRNA processing and repair. Also involved in tRNA surveillance by mediating tandem CCA addition to generate a CCACCA at the 3' terminus of unstable tRNAs. While stable tRNAs receive only 3'-terminal CCA, unstable tRNAs are marked with CCACCA and rapidly degraded. The sequence is that of Multifunctional CCA protein from Legionella pneumophila (strain Lens).